Reading from the N-terminus, the 99-residue chain is Meromycolate extension acyl carrier protein (99 aa).

The 79-residue stretch at 3-81 folds into the Carrier domain; sequence ATQEEIIAGL…DVVAYIQKLE (79 aa). O-(pantetheine 4'-phosphoryl)serine is present on Ser41. An Isoglutamyl lysine isopeptide (Lys-Gln) (interchain with Q-Cter in protein Pup) cross-link involves residue Lys79.

The protein belongs to the acyl carrier protein (ACP) family. In terms of processing, 4'-phosphopantetheine is transferred from CoA to a specific serine of apo-AcpM.

The protein resides in the cytoplasm. Its function is as follows. Acyl carrier protein involved in meromycolate extension. This chain is Meromycolate extension acyl carrier protein (acpM), found in Mycolicibacterium smegmatis (strain ATCC 700084 / mc(2)155) (Mycobacterium smegmatis).